Consider the following 197-residue polypeptide: MGTEWHKPKLSLALVLLTLEAGWAQEGSEPVLLEGECLVVCEPGRPTAGGPGGAALGEAPPGRVAFAAVRSHHHEPAGETGNGTSGAIYFDQVLVNEGEGFDRTSGCFVAPVRGVYSFRFHVVKVYNRQTVQVSLMLNTWPVISAFANDPDVTREAATSSVLLPLDPGDRVSLRLRRGNLLGGWKYSSFSGFLIFPL.

Residues 1–24 (MGTEWHKPKLSLALVLLTLEAGWA) form the signal peptide. The region spanning 59–197 (APPGRVAFAA…SFSGFLIFPL (139 aa)) is the C1q domain. The interval 64-197 (VAFAAVRSHH…SFSGFLIFPL (134 aa)) is necessary for interaction with CBLN3, and homotrimerization. An N-linked (GlcNAc...) asparagine glycan is attached at N82.

As to quaternary structure, heterohexamer; disulfide-linked heterotrimers. Interacts with CBLN1. May also form oligomers with CBLN2 and CBLN4. Expressed in brain, restricted to the cerebellar cortex. Within the cerebellum, expressed in granule layers (at protein level). Also detected in postsynaptic Purkinje cell spines (at protein level).

It is found in the endoplasmic reticulum. It localises to the golgi apparatus. The protein localises to the cis-Golgi network. Its subcellular location is the secreted. The protein resides in the synapse. May be involved in synaptic functions in the CNS. The protein is Cerebellin-3 (Cbln3) of Mus musculus (Mouse).